A 599-amino-acid polypeptide reads, in one-letter code: DNA primase (599 aa).

A CHC2-type zinc finger spans residues 38–62 (CPFHDEKTPSFTVSEDKQICHCFGC). Residues 260 to 341 (DEIVLLEGFM…NVFVIQLPSG (82 aa)) form the Toprim domain. Mg(2+) contacts are provided by E266, D310, and D312.

This sequence belongs to the DnaG primase family. As to quaternary structure, monomer. Interacts with DnaB. The cofactor is Zn(2+). Mg(2+) is required as a cofactor.

The enzyme catalyses ssDNA + n NTP = ssDNA/pppN(pN)n-1 hybrid + (n-1) diphosphate.. Functionally, RNA polymerase that catalyzes the synthesis of short RNA molecules used as primers for DNA polymerase during DNA replication. In Staphylococcus aureus (strain COL), this protein is DNA primase.